The sequence spans 251 residues: MRRPMVAGNWKMHGTRASVAELINGLRHLALPSGVDVAVFPPCLYINQVIDGLKGKSIQVGAQNSAVESMQGALTGEIAPSQLVDAGCSLVLVGHSERRLIMGERDATLNRKFAAAQACGLKPVLCVGETLEQREAGKTLEVVGRQLGSIIEELGVGAFANAVIAYEPVWAIGTGLTATPQQAQDVHAAIRAQLAAENSEVARGVRLLYGGSVKAANAVELFGMPDIDGGLIGGASLNADEFGAICRAAGN.

Asparagine 9–lysine 11 provides a ligand contact to substrate. The active-site Electrophile is the histidine 95. Glutamate 167 serves as the catalytic Proton acceptor. Substrate contacts are provided by residues glycine 173, serine 212, and glycine 233 to glycine 234.

It belongs to the triosephosphate isomerase family. As to quaternary structure, homodimer.

It localises to the cytoplasm. The catalysed reaction is D-glyceraldehyde 3-phosphate = dihydroxyacetone phosphate. It functions in the pathway carbohydrate biosynthesis; gluconeogenesis. The protein operates within carbohydrate degradation; glycolysis; D-glyceraldehyde 3-phosphate from glycerone phosphate: step 1/1. Involved in the gluconeogenesis. Catalyzes stereospecifically the conversion of dihydroxyacetone phosphate (DHAP) to D-glyceraldehyde-3-phosphate (G3P). This Pseudomonas fluorescens (strain ATCC BAA-477 / NRRL B-23932 / Pf-5) protein is Triosephosphate isomerase.